A 591-amino-acid chain; its full sequence is Paxillin (591 aa).

Met1 is subject to N-acetylmethionine. Asp2 carries the N-acetylserine modification. The short motif at 3–15 is the LD motif 1 element; it reads DLDALLADLESTT. The tract at residues 17–138 is disordered; that stretch reads HISKRPVFLS…PSPTVMSTSL (122 aa). Phosphotyrosine; by PTK6 is present on Tyr31. Residues 45–54 show a composition bias toward pro residues; that stretch reads VPPPVPPPPS. Over residues 69 to 106 the composition is skewed to polar residues; the sequence is WQPSSSRFIHQQPQSSSPVYGSSAKTSSVSNPQDSVGS. Phosphoserine occurs at positions 83 and 85. Phosphotyrosine is present on Tyr88. Ser106 bears the Phosphoserine mark. At Tyr118 the chain carries Phosphotyrosine; by PTK6. Phosphoserine is present on residues Ser119, Ser126, and Ser130. Residues 121-137 show a composition bias toward polar residues; that stretch reads PNKQKSAEPSPTVMSTS. At Thr132 the chain carries Phosphothreonine. Phosphoserine occurs at positions 137, 140, and 143. An LD motif 2 motif is present at residues 144–156; it reads ELDRLLLELNAVQ. A disordered region spans residues 159–260; sequence PPGFPADEAN…TQQQTRISAS (102 aa). Tyr181 is subject to Phosphotyrosine. The short motif at 216 to 228 is the LD motif 3 element; sequence SVESLLDELESSV. A Phosphoserine modification is found at Ser230. Positions 236–260 are enriched in polar residues; sequence TVNQGEMSSPQRVTSTQQQTRISAS. Ser244 is modified (phosphoserine; by CDK5). Ser250 is subject to Phosphoserine; by SLK. Phosphoserine is present on residues Ser258, Ser261, Ser272, Ser303, Ser322, Ser332, and Ser340. Residues 262–315 are required for binding to PARVA and ILK; it reads ATRELDELMASLSDFKIQGLEQRADGERCWAAGWPRDGGRSSPGGQDEGGFMAQ. The short motif at 265-276 is the LD motif 4 element; that stretch reads ELDELMASLSDF. The tract at residues 291–335 is disordered; the sequence is WAAGWPRDGGRSSPGGQDEGGFMAQGKTGSSSPPGGPPKPGSQLD. The short motif at 333 to 345 is the LD motif 5 element; sequence QLDSMLGSLQSDL. LIM zinc-binding domains follow at residues 356–415, 416–473, 474–533, and 534–591; these read GVCG…LFSP, RCYY…DMFA, PKCG…RRGS, and LCSG…KLFC. At Ser533 the chain carries Phosphoserine.

The protein belongs to the paxillin family. In terms of assembly, interacts in vitro with VCL/vinculin as well as to the SH3 domain of SRC and, when tyrosine phosphorylated, to the SH2 domain of CRK. Interacts with GIT1. Interacts with NUDT16L1/SDOS. Interacts with PTK2/FAK1. Interacts with PTK2B/PYK2. Interacts with ASAP2. Interacts with unphosphorylated ITGA4. Interacts with RNF5. Interacts with PDCD10. Interacts with NEK3, the interaction is prolactin-dependent. Interacts with PTK6. Interacts with TGFB1I1. Interacts with SORBS1. Interacts with PARVB. Interacts (via LD motif 4) with PARVA/PARVIN. Interacts (via LD motif 4) with ILK. Interacts (via cytoplasmic domain) with CEACAM1; the interaction is phosphotyrosyl-dependent. Interacts with LIMA1; this complex stabilizes actin dynamics. Interacts with CD36 (via C-terminus). Interacts with TRIM15. Interacts with PAK4; PAK4 acts as a scaffold to suppport PAXI phosphorylation at Ser-272. Interacts strongly with PTK2/FAK1 and weakly with VCL/vinculin. As to quaternary structure, interacts strongly with VCL/vinculin but only weakly with PTK2/FAK1. Phosphorylated by MAPK1/ERK2. Phosphorylated on tyrosine residues during integrin-mediated cell adhesion, embryonic development, fibroblast transformation and following stimulation of cells by mitogens. Phosphorylation at Ser-244 by CDK5 reduces its interaction with PTK2/FAK1 in matrix-cell focal adhesions (MCFA) during oligodendrocytes (OLs) differentiation. Phosphorylation at Tyr-31 and Tyr-118 by PTK6 promote the activation of RAC1 via CRK/CrKII, thereby promoting migration and invasion. Phosphorylation at Ser-250 by SLK is required for PXN redistribution and cell motility. Phosphorylation at Ser-272 promotes focal adhesion disassembly during cell migration.

It is found in the cytoplasm. The protein localises to the cytoskeleton. Its subcellular location is the cell junction. It localises to the focal adhesion. The protein resides in the cell cortex. Functionally, cytoskeletal protein involved in actin-membrane attachment at sites of cell adhesion to the extracellular matrix (focal adhesion). Recruits other proteins such as TRIM15 to focal adhesion. The chain is Paxillin from Homo sapiens (Human).